Consider the following 525-residue polypeptide: DNA damage-binding protein cmr1 (525 aa).

Residues 34–50 (TGVFTSNMPRGTSANQS) are compositionally biased toward polar residues. Disordered stretches follow at residues 34-103 (TGVF…ERAK), 214-240 (DASQ…DPDP), and 282-301 (TSSV…PISG). The span at 83-102 (EIAKRKADEEYDRRQEEERA) shows a compositional bias: basic and acidic residues. The stretch at 182 to 223 (ITPERIYSMTFHPSEAKPVIFAGDKMGHLGILDASQEKPTSA) is one WD 1 repeat. Residues 227-239 (EDDEDDEDDDDPD) show a composition bias toward acidic residues. WD repeat units follow at residues 247 to 287 (PHTR…SVEK), 339 to 379 (LSEK…HTDP), 384 to 425 (EHQS…SSWK), 448 to 491 (GRWV…LAQL), and 494 to 525 (DGIT…CLWM).

Belongs to the WD repeat DDB2/WDR76 family.

DNA-binding protein that binds to both single- and double-stranded DNA. Binds preferentially to UV-damaged DNA. May be involved in DNA-metabolic processes. This Emericella nidulans (strain FGSC A4 / ATCC 38163 / CBS 112.46 / NRRL 194 / M139) (Aspergillus nidulans) protein is DNA damage-binding protein cmr1.